A 180-amino-acid polypeptide reads, in one-letter code: Ribulose bisphosphate carboxylase small subunit, chloroplastic (180 aa).

The N-terminal 57 residues, 1-57 (MVSSMMVSSAATFTRASPAQSSMVAPFTGLKSASAFPVTRKPNADLSHLPSNGGRVQ), are a transit peptide targeting the chloroplast.

Belongs to the RuBisCO small chain family. In terms of assembly, heterohexadecamer of 8 large and 8 small subunits.

The protein resides in the plastid. It is found in the chloroplast. RuBisCO catalyzes two reactions: the carboxylation of D-ribulose 1,5-bisphosphate, the primary event in carbon dioxide fixation, as well as the oxidative fragmentation of the pentose substrate. Both reactions occur simultaneously and in competition at the same active site. Although the small subunit is not catalytic it is essential for maximal activity. This chain is Ribulose bisphosphate carboxylase small subunit, chloroplastic, found in Musa acuminata (Banana).